Consider the following 239-residue polypeptide: Leucyl/phenylalanyl-tRNA--protein transferase (239 aa).

Belongs to the L/F-transferase family.

The protein resides in the cytoplasm. It carries out the reaction N-terminal L-lysyl-[protein] + L-leucyl-tRNA(Leu) = N-terminal L-leucyl-L-lysyl-[protein] + tRNA(Leu) + H(+). The enzyme catalyses N-terminal L-arginyl-[protein] + L-leucyl-tRNA(Leu) = N-terminal L-leucyl-L-arginyl-[protein] + tRNA(Leu) + H(+). The catalysed reaction is L-phenylalanyl-tRNA(Phe) + an N-terminal L-alpha-aminoacyl-[protein] = an N-terminal L-phenylalanyl-L-alpha-aminoacyl-[protein] + tRNA(Phe). Its function is as follows. Functions in the N-end rule pathway of protein degradation where it conjugates Leu, Phe and, less efficiently, Met from aminoacyl-tRNAs to the N-termini of proteins containing an N-terminal arginine or lysine. The polypeptide is Leucyl/phenylalanyl-tRNA--protein transferase (Syntrophus aciditrophicus (strain SB)).